The chain runs to 193 residues: MIILGVDPGLTRCGVGVIEAGAYRRLSFIHVDVVRSDPKTSQDLRLLAIYNGLVEKIERFAPDAVSIERVFAQENRNTVLGTAQAAGLAMLAAAQRGIPVALHTPTESKLAITGNGKAEKIQMERMVARILGLNTLPKPADAADALAIAICHALRPAGALQGGEREQHLTAAQRQWAQASQKAARRQGVRRGM.

Catalysis depends on residues Asp-7, Glu-68, and Asp-141. Asp-7, Glu-68, and Asp-141 together coordinate Mg(2+).

It belongs to the RuvC family. In terms of assembly, homodimer which binds Holliday junction (HJ) DNA. The HJ becomes 2-fold symmetrical on binding to RuvC with unstacked arms; it has a different conformation from HJ DNA in complex with RuvA. In the full resolvosome a probable DNA-RuvA(4)-RuvB(12)-RuvC(2) complex forms which resolves the HJ. Requires Mg(2+) as cofactor.

It localises to the cytoplasm. The enzyme catalyses Endonucleolytic cleavage at a junction such as a reciprocal single-stranded crossover between two homologous DNA duplexes (Holliday junction).. The RuvA-RuvB-RuvC complex processes Holliday junction (HJ) DNA during genetic recombination and DNA repair. Endonuclease that resolves HJ intermediates. Cleaves cruciform DNA by making single-stranded nicks across the HJ at symmetrical positions within the homologous arms, yielding a 5'-phosphate and a 3'-hydroxyl group; requires a central core of homology in the junction. The consensus cleavage sequence is 5'-(A/T)TT(C/G)-3'. Cleavage occurs on the 3'-side of the TT dinucleotide at the point of strand exchange. HJ branch migration catalyzed by RuvA-RuvB allows RuvC to scan DNA until it finds its consensus sequence, where it cleaves and resolves the cruciform DNA. This is Crossover junction endodeoxyribonuclease RuvC from Bifidobacterium adolescentis (strain ATCC 15703 / DSM 20083 / NCTC 11814 / E194a).